Consider the following 133-residue polypeptide: Profilin (133 aa).

It belongs to the profilin family. Occurs in many kinds of cells as a complex with monomeric actin in a 1:1 ratio.

It is found in the cytoplasm. The protein localises to the cytoskeleton. In terms of biological role, binds to actin and affects the structure of the cytoskeleton. At high concentrations, profilin prevents the polymerization of actin, whereas it enhances it at low concentrations. By binding to PIP2, it inhibits the formation of IP3 and DG. The protein is Profilin of Mercurialis annua (Annual mercury).